Consider the following 140-residue polypeptide: Putative pre-16S rRNA nuclease (140 aa).

Belongs to the YqgF nuclease family.

The protein resides in the cytoplasm. In terms of biological role, could be a nuclease involved in processing of the 5'-end of pre-16S rRNA. The sequence is that of Putative pre-16S rRNA nuclease from Halothermothrix orenii (strain H 168 / OCM 544 / DSM 9562).